Consider the following 281-residue polypeptide: 2-dehydro-3-deoxyphosphooctonate aldolase (281 aa).

This sequence belongs to the KdsA family.

It is found in the cytoplasm. The enzyme catalyses D-arabinose 5-phosphate + phosphoenolpyruvate + H2O = 3-deoxy-alpha-D-manno-2-octulosonate-8-phosphate + phosphate. The protein operates within carbohydrate biosynthesis; 3-deoxy-D-manno-octulosonate biosynthesis; 3-deoxy-D-manno-octulosonate from D-ribulose 5-phosphate: step 2/3. It participates in bacterial outer membrane biogenesis; lipopolysaccharide biosynthesis. This chain is 2-dehydro-3-deoxyphosphooctonate aldolase, found in Psychromonas ingrahamii (strain DSM 17664 / CCUG 51855 / 37).